Here is a 25-residue protein sequence, read N- to C-terminus: Dermaseptin-DI5 (25 aa).

Belongs to the frog skin active peptide (FSAP) family. Dermaseptin subfamily. As to expression, expressed by the skin glands.

It localises to the secreted. Antibacterial peptide with activity against Gram-positive bacteria S.aureus and E.faecalis, and Gram-negative bacteria P.aeruginosa and E.coli. The sequence is that of Dermaseptin-DI5 from Phyllomedusa distincta (Monkey frog).